Here is a 70-residue protein sequence, read N- to C-terminus: Sec-independent protein translocase protein TatA (70 aa).

Residues 1-21 (MGSFSVWHWLIVLVIVLVLFG) traverse the membrane as a helical segment. The interval 42–70 (GMADEDQTPPPADANANAKTVDHKADEIK) is disordered. Positions 61–70 (TVDHKADEIK) are enriched in basic and acidic residues.

The protein belongs to the TatA/E family. In terms of assembly, the Tat system comprises two distinct complexes: a TatABC complex, containing multiple copies of TatA, TatB and TatC subunits, and a separate TatA complex, containing only TatA subunits. Substrates initially bind to the TatABC complex, which probably triggers association of the separate TatA complex to form the active translocon.

The protein localises to the cell inner membrane. Functionally, part of the twin-arginine translocation (Tat) system that transports large folded proteins containing a characteristic twin-arginine motif in their signal peptide across membranes. TatA could form the protein-conducting channel of the Tat system. This Agrobacterium fabrum (strain C58 / ATCC 33970) (Agrobacterium tumefaciens (strain C58)) protein is Sec-independent protein translocase protein TatA.